A 151-amino-acid chain; its full sequence is Putative pre-16S rRNA nuclease (151 aa).

The protein belongs to the YqgF nuclease family.

The protein localises to the cytoplasm. In terms of biological role, could be a nuclease involved in processing of the 5'-end of pre-16S rRNA. The polypeptide is Putative pre-16S rRNA nuclease (Methylococcus capsulatus (strain ATCC 33009 / NCIMB 11132 / Bath)).